The primary structure comprises 532 residues: Pentatricopeptide repeat-containing protein At4g02820, mitochondrial (532 aa).

Residues 1-28 (MNKNMLVRSARPTLASIHRLFSAAAAAT) constitute a mitochondrion transit peptide. Residues 35-56 (PVVKPRSGGGKGGESANKKETV) are disordered. PPR repeat units lie at residues 161–195 (GHAACTSLLHSYVQNKLSDKAEALFEKMGECGFLK), 196–226 (SCLPYNHMLSMYISRGQFEKVPVLIKELKIR), 230–264 (DIVTYNLWLTAFASGNDVEGAEKVYLKAKEEKLNP), 265–295 (DWVTYSVLTNLYAKTDNVEKARLALKEMEKL), 300–330 (NRVAYASLISLHANLGDKDGVNLTWKKVKSS), 335–365 (NDAEYLSMISAVVKLGEFEQAKGLYDEWESV), 370–404 (DARIPNLILAEYMNRDEVLLGEKFYERIVEKGINP), 405–435 (SYSTWEILTWAYLKRKDMEKVLDCFGKAIDS), 442–472 (NVRLVKGACKELEEQGNVKGAEKLMTLLQKA), and 476–512 (NTQLYNSLLRTYAKAGEMALIVEERMAKDNVELDEET).

Belongs to the PPR family. P subfamily.

Its subcellular location is the mitochondrion. This is Pentatricopeptide repeat-containing protein At4g02820, mitochondrial from Arabidopsis thaliana (Mouse-ear cress).